Consider the following 488-residue polypeptide: GTPase Der (488 aa).

2 consecutive EngA-type G domains span residues 3-166 and 199-372; these read PVVA…AEAM and IKLA…DSAT. GTP-binding positions include 9-16, 56-60, 118-121, 205-212, 252-256, and 317-320; these read GRPNVGKS, DTGGI, NKID, GKPNVGKS, DTAGV, and NKWD. One can recognise a KH-like domain in the interval 373–457; that stretch reads RRVSTSMLTR…PIQLRFQEGD (85 aa).

Belongs to the TRAFAC class TrmE-Era-EngA-EngB-Septin-like GTPase superfamily. EngA (Der) GTPase family. Associates with the 50S ribosomal subunit.

Functionally, GTPase that plays an essential role in the late steps of ribosome biogenesis. This is GTPase Der from Shewanella sp. (strain ANA-3).